The chain runs to 123 residues: Small ribosomal subunit protein uS11 (123 aa).

Residues 1 to 22 (MAKKRKKKLSSPEGISHIHASA) are disordered.

This sequence belongs to the universal ribosomal protein uS11 family. As to quaternary structure, part of the 30S ribosomal subunit. Interacts with proteins S7 and S18. Binds to IF-3.

In terms of biological role, located on the platform of the 30S subunit, it bridges several disparate RNA helices of the 16S rRNA. Forms part of the Shine-Dalgarno cleft in the 70S ribosome. The protein is Small ribosomal subunit protein uS11 of Malacoplasma penetrans (strain HF-2) (Mycoplasma penetrans).